The following is a 1034-amino-acid chain: FACT complex subunit spt-16 (1034 aa).

3 stretches are compositionally biased toward basic and acidic residues: residues 433–448 (EEQE…DQKK), 463–481 (TRNK…KELG), and 493–503 (SKQDGGTDEKK). Residues 433–511 (EEQENRETER…KKVKKSNVSY (79 aa)) are disordered. The stretch at 617–642 (LSTAFRQIKEMQKRFRTEEAEEREKD) forms a coiled coil. Composition is skewed to acidic residues over residues 926-950 (AESE…EADA) and 959-983 (SDED…DSDE). Positions 926–1034 (AESEGEDAGD…KAGPSHKRRK (109 aa)) are disordered. Residues 984 to 1020 (SEGKDWSDLEEEAAKADKRREVEDGGRDRDRDRDRKR) are compositionally biased toward basic and acidic residues. Residues 1021–1034 (PSSSKAGPSHKRRK) show a composition bias toward basic residues.

The protein belongs to the peptidase M24 family. SPT16 subfamily. As to quaternary structure, component of the FACT complex, a stable heterodimer of spt-16 and hmg-3 or hmg-4.

It localises to the nucleus. Its subcellular location is the chromosome. In terms of biological role, component of the FACT complex, a general chromatin factor that acts to reorganize nucleosomes. The FACT complex is involved in multiple processes that require DNA as a template such as mRNA elongation, DNA replication and DNA repair. During transcription elongation the FACT complex acts as a histone chaperone that both destabilizes and restores nucleosomal structure. It facilitates the passage of RNA polymerase II and transcription by promoting the dissociation of one histone H2A-H2B dimer from the nucleosome, then subsequently promotes the reestablishment of the nucleosome following the passage of RNA polymerase II. The polypeptide is FACT complex subunit spt-16 (spt-16) (Caenorhabditis briggsae).